The sequence spans 376 residues: Chaperone protein DnaJ (376 aa).

The J domain maps to 5–70 (DFYEVLGVGR…DKKAAYDQFG (66 aa)). Residues 132–210 (GLTKELRIPT…CHGEGRVEKS (79 aa)) form a CR-type zinc finger. Residues Cys145, Cys148, Cys162, Cys165, Cys184, Cys187, Cys198, and Cys201 each contribute to the Zn(2+) site. CXXCXGXG motif repeat units follow at residues 145–152 (CDACDGSG), 162–169 (CGTCHGQG), 184–191 (CPTCHGRG), and 198–205 (CNKCHGEG).

Belongs to the DnaJ family. In terms of assembly, homodimer. The cofactor is Zn(2+).

Its subcellular location is the cytoplasm. In terms of biological role, participates actively in the response to hyperosmotic and heat shock by preventing the aggregation of stress-denatured proteins and by disaggregating proteins, also in an autonomous, DnaK-independent fashion. Unfolded proteins bind initially to DnaJ; upon interaction with the DnaJ-bound protein, DnaK hydrolyzes its bound ATP, resulting in the formation of a stable complex. GrpE releases ADP from DnaK; ATP binding to DnaK triggers the release of the substrate protein, thus completing the reaction cycle. Several rounds of ATP-dependent interactions between DnaJ, DnaK and GrpE are required for fully efficient folding. Also involved, together with DnaK and GrpE, in the DNA replication of plasmids through activation of initiation proteins. This chain is Chaperone protein DnaJ, found in Shewanella halifaxensis (strain HAW-EB4).